The following is a 491-amino-acid chain: Cytochrome P450 2C40 (491 aa).

The N-terminal stretch at 1–25 is a signal peptide; that stretch reads MDPFVVLVLCLSFLLVLSLWRQRSA. Cysteine 435 serves as a coordination point for heme.

It belongs to the cytochrome P450 family. Heme is required as a cofactor. Liver, brain, kidney, and intestine, with trace amounts in lung and heart. Expressed throughout the intestinal tract, with higher expression levels in jejunum, cecum and colon.

The protein localises to the endoplasmic reticulum membrane. It localises to the microsome membrane. The enzyme catalyses (5Z,8Z,11Z,14Z)-eicosatetraenoate + reduced [NADPH--hemoprotein reductase] + O2 = 16(R)-hydroxy-(5Z,8Z,11Z,14Z)-eicosatetraenoate + oxidized [NADPH--hemoprotein reductase] + H2O + H(+). It catalyses the reaction (5Z,8Z,11Z,14Z)-eicosatetraenoate + reduced [NADPH--hemoprotein reductase] + O2 = 16(S)-hydroxy-(5Z,8Z,11Z,14Z)-eicosatetraenoate + oxidized [NADPH--hemoprotein reductase] + H2O + H(+). The catalysed reaction is (5Z,8Z,11Z,14Z)-eicosatetraenoate + reduced [NADPH--hemoprotein reductase] + O2 = (14R,15S)-epoxy-(5Z,8Z,11Z)-eicosatrienoate + oxidized [NADPH--hemoprotein reductase] + H2O + H(+). It carries out the reaction (5Z,8Z,11Z,14Z)-eicosatetraenoate + reduced [NADPH--hemoprotein reductase] + O2 = (14S,15R)-epoxy-(5Z,8Z,11Z)-eicosatrienoate + oxidized [NADPH--hemoprotein reductase] + H2O + H(+). It functions in the pathway lipid metabolism; arachidonate metabolism. Its function is as follows. A cytochrome P450 monooxygenase that may play a major role in the metabolism of arachidonic acid in the intestinal tract. Exhibits regioselective hydroxylase and epoxidase activity toward arachidonic acid, producing 16(R)-hydroxyeicosatetraenoic acid (HETE) and (14R,15S)-epoxyeicosatrienoic acid (EpETrE) as major products. Mechanistically, uses molecular oxygen inserting one oxygen atom into a substrate, and reducing the second into a water molecule, with two electrons provided by NADPH via cytochrome P450 reductase (CPR; NADPH-ferrihemoprotein reductase). The sequence is that of Cytochrome P450 2C40 from Mus musculus (Mouse).